Consider the following 250-residue polypeptide: MSRRYDSRTTIFSPEGRLYQVEYAMEAIGNAGSALGVLAADGVVLVGEKKVTSKLLQTSRSAEKMYKIDSHLACAVAGIMSDANILLNTARLHAQRYALSYQEPIPVEQLVQSLCDTKQGYTQFGGLRPFGVSFLFAGWDKHHGFQLYMSDPSGNYSGWKAAAVGANSQAAQSMLKQDYRDGMTREEAVALALKVLSKTMDSTSLTAEKLELAEVFLQPGTGEVQYQVCSPEAMGKLLAKAGLSQPAPEA.

Belongs to the peptidase T1A family. In terms of assembly, the 26S proteasome consists of a 20S proteasome core and two 19S regulatory subunits. The 20S proteasome core is composed of 28 subunits that are arranged in four stacked rings, resulting in a barrel-shaped structure. The two end rings are each formed by seven alpha subunits, and the two central rings are each formed by seven beta subunits. The catalytic chamber with the active sites is on the inside of the barrel.

It is found in the cytoplasm. It localises to the nucleus. Functionally, the proteasome is a multicatalytic proteinase complex which is characterized by its ability to cleave peptides with Arg, Phe, Tyr, Leu, and Glu adjacent to the leaving group at neutral or slightly basic pH. The proteasome has an ATP-dependent proteolytic activity. This Oryza sativa subsp. indica (Rice) protein is Proteasome subunit alpha type-4-1.